A 355-amino-acid polypeptide reads, in one-letter code: UPF0421 protein BCE_2776 (355 aa).

The next 4 helical transmembrane spans lie at Ile19 to Val39, Phe74 to Val94, Thr109 to Ile129, and Leu131 to Pro151.

Belongs to the UPF0421 family.

It is found in the cell membrane. This chain is UPF0421 protein BCE_2776, found in Bacillus cereus (strain ATCC 10987 / NRS 248).